The chain runs to 1045 residues: B3 domain-containing protein REM13 (1045 aa).

A DNA-binding region (TF-B3 1) is located at residues 7–96 (YPQFFHTLVP…VFHVSNLGPN (90 aa)). Residues 121–147 (NNGDVCDSEELPKEKKAKTNSEEADAV) form a disordered region. Residues 130 to 141 (ELPKEKKAKTNS) are compositionally biased toward basic and acidic residues. 2 DNA-binding regions (TF-B3) span residues 157–253 (CFMA…FCPT) and 305–398 (FVTF…CSPE). Residues 423 to 449 (NRDKISNNDKEENMSWERKKDHLKSRD) are disordered. A DNA-binding region (TF-B3 4) is located at residues 474 to 570 (SNDSCLVVVS…TPVLSLCPAD (97 aa)). The segment at 606–625 (IKDDNSKEKNDKEESKSVDG) is disordered. 3 DNA-binding regions (TF-B3) span residues 643-738 (FVTL…LRTE), 815-910 (FVTF…LRTK), and 940-1035 (FVTL…LKFS).

It is found in the nucleus. The polypeptide is B3 domain-containing protein REM13 (REM13) (Arabidopsis thaliana (Mouse-ear cress)).